We begin with the raw amino-acid sequence, 314 residues long: Leucotoxin LukE (314 aa).

The N-terminal stretch at Met-1 to Ala-28 is a signal peptide.

This sequence belongs to the aerolysin family. As to quaternary structure, toxicity requires sequential binding and synergistic association of a class S and a class F component which form heterooligomeric complexes. LukE (class S) associates with LukD (class F). LukE can also associate with HlgB.

It is found in the secreted. Its function is as follows. Part of a bi-component leucotoxin that acts by forming pores in the membrane of the target cells. LukE-LukD is as effective as the Panton-Valentine leucocidin (PVL) for inducing dermonecrosis when injected in the rabbit skin, but not hemolytic and poorly leucotoxic on human blood cells compared to other leucotoxins expressed by S.aureus. The polypeptide is Leucotoxin LukE (lukE) (Staphylococcus aureus).